The primary structure comprises 426 residues: Serine--tRNA ligase (426 aa).

233-235 (TAE) is an L-serine binding site. 264–266 (RSE) lines the ATP pocket. Glu287 contacts L-serine. ATP is bound at residue 351-354 (EISS). Residue Ser387 coordinates L-serine.

Belongs to the class-II aminoacyl-tRNA synthetase family. Type-1 seryl-tRNA synthetase subfamily. As to quaternary structure, homodimer. The tRNA molecule binds across the dimer.

The protein localises to the cytoplasm. The catalysed reaction is tRNA(Ser) + L-serine + ATP = L-seryl-tRNA(Ser) + AMP + diphosphate + H(+). The enzyme catalyses tRNA(Sec) + L-serine + ATP = L-seryl-tRNA(Sec) + AMP + diphosphate + H(+). The protein operates within aminoacyl-tRNA biosynthesis; selenocysteinyl-tRNA(Sec) biosynthesis; L-seryl-tRNA(Sec) from L-serine and tRNA(Sec): step 1/1. Catalyzes the attachment of serine to tRNA(Ser). Is also able to aminoacylate tRNA(Sec) with serine, to form the misacylated tRNA L-seryl-tRNA(Sec), which will be further converted into selenocysteinyl-tRNA(Sec). This is Serine--tRNA ligase from Pseudomonas putida (strain GB-1).